Reading from the N-terminus, the 321-residue chain is Ribose-phosphate pyrophosphokinase (321 aa).

Residues 39 to 41 and 98 to 99 contribute to the ATP site; these read DGE and RQ. Residues histidine 132 and aspartate 170 each contribute to the Mg(2+) site. Residue lysine 195 is part of the active site. D-ribose 5-phosphate-binding positions include arginine 197, aspartate 221, and 225 to 229; that span reads DTGGT.

Belongs to the ribose-phosphate pyrophosphokinase family. Class I subfamily. In terms of assembly, homohexamer. Mg(2+) is required as a cofactor.

The protein resides in the cytoplasm. It carries out the reaction D-ribose 5-phosphate + ATP = 5-phospho-alpha-D-ribose 1-diphosphate + AMP + H(+). The protein operates within metabolic intermediate biosynthesis; 5-phospho-alpha-D-ribose 1-diphosphate biosynthesis; 5-phospho-alpha-D-ribose 1-diphosphate from D-ribose 5-phosphate (route I): step 1/1. In terms of biological role, involved in the biosynthesis of the central metabolite phospho-alpha-D-ribosyl-1-pyrophosphate (PRPP) via the transfer of pyrophosphoryl group from ATP to 1-hydroxyl of ribose-5-phosphate (Rib-5-P). This is Ribose-phosphate pyrophosphokinase from Mycoplasmopsis pulmonis (strain UAB CTIP) (Mycoplasma pulmonis).